Reading from the N-terminus, the 180-residue chain is Prothoracicotropic hormone (180 aa).

The N-terminal stretch at 1–15 (MKLLILCVMVHGLLA) is a signal peptide. The propeptide occupies 16–64 (EGPGQVLWKEQVVAPEFLLDDREDIASNRNAFFYEDKRSFRPEGLGEQV). Cystine bridges form between C88/C123 and C111/C175.

Homodimer; disulfide-linked.

The protein localises to the secreted. In terms of biological role, PTTH is a brain secretory polypeptide of insects which stimulates the prothoracic glands to produce and release ecdysone, the steroid essential to insect development. This chain is Prothoracicotropic hormone, found in Camponotus floridanus (Florida carpenter ant).